The following is a 684-amino-acid chain: DNA-directed RNA polymerase subunit beta' (684 aa).

Residues Cys69, Cys71, Cys87, and Cys90 each coordinate Zn(2+). Mg(2+) contacts are provided by Asp489, Asp491, and Asp493.

The protein belongs to the RNA polymerase beta' chain family. RpoC1 subfamily. In terms of assembly, in plastids the minimal PEP RNA polymerase catalytic core is composed of four subunits: alpha, beta, beta', and beta''. When a (nuclear-encoded) sigma factor is associated with the core the holoenzyme is formed, which can initiate transcription. It depends on Mg(2+) as a cofactor. Zn(2+) is required as a cofactor.

It is found in the plastid. It localises to the chloroplast. The catalysed reaction is RNA(n) + a ribonucleoside 5'-triphosphate = RNA(n+1) + diphosphate. Functionally, DNA-dependent RNA polymerase catalyzes the transcription of DNA into RNA using the four ribonucleoside triphosphates as substrates. The sequence is that of DNA-directed RNA polymerase subunit beta' from Morus indica (Mulberry).